A 285-amino-acid chain; its full sequence is Steroidogenic acute regulatory protein, mitochondrial (285 aa).

The N-terminal 61 residues, 1–61 (MLPATFKLCA…RRSSLLSSPI (61 aa)), are a transit peptide targeting the mitochondrion. The region spanning 65-278 (TYSEADQCYV…LRDRMASGGG (214 aa)) is the START domain.

May interact with TSPO. Highly expressed in the testis and at lower levels in the ovary, kidney and head.

It localises to the mitochondrion. It catalyses the reaction cholesterol(in) = cholesterol(out). The protein operates within steroid metabolism; cholesterol metabolism. In terms of biological role, plays a key role in steroid hormone synthesis by enhancing the metabolism of cholesterol into pregnenolone. Mediates the transfer of cholesterol from the outer mitochondrial membrane to the inner mitochondrial membrane where it is cleaved to pregnenolone. This Danio rerio (Zebrafish) protein is Steroidogenic acute regulatory protein, mitochondrial (star).